Reading from the N-terminus, the 525-residue chain is D-arabinono-1,4-lactone oxidase (525 aa).

Residues tyrosine 23 to glutamate 197 enclose the FAD-binding PCMH-type domain. Residue histidine 60 is modified to Pros-8alpha-FAD histidine.

This sequence belongs to the oxygen-dependent FAD-linked oxidoreductase family. The cofactor is FAD.

It is found in the mitochondrion membrane. The catalysed reaction is D-arabinono-1,4-lactone + O2 = dehydro-D-arabinono-1,4-lactone + H2O2 + H(+). Its pathway is cofactor biosynthesis; D-erythroascorbate biosynthesis; dehydro-D-arabinono-1,4-lactone from D-arabinose: step 2/2. The sequence is that of D-arabinono-1,4-lactone oxidase (ALO1) from Kluyveromyces lactis (strain ATCC 8585 / CBS 2359 / DSM 70799 / NBRC 1267 / NRRL Y-1140 / WM37) (Yeast).